Reading from the N-terminus, the 151-residue chain is Large ribosomal subunit protein uL13 (151 aa).

The interval 129–151 (PTHPHDAQKPKELNINTIPGAES) is disordered. Over residues 131-140 (HPHDAQKPKE) the composition is skewed to basic and acidic residues.

Belongs to the universal ribosomal protein uL13 family. In terms of assembly, part of the 50S ribosomal subunit.

Its function is as follows. This protein is one of the early assembly proteins of the 50S ribosomal subunit, although it is not seen to bind rRNA by itself. It is important during the early stages of 50S assembly. The sequence is that of Large ribosomal subunit protein uL13 from Trichormus variabilis (strain ATCC 29413 / PCC 7937) (Anabaena variabilis).